Consider the following 267-residue polypeptide: Ras-related protein Rab-36 (267 aa).

GTP-binding residues include V68, G69, K70, T71, S72, D83, Y86, and T89. Residue T71 coordinates Mg(2+). Residues 76–94 carry the Switch 1 motif; the sequence is RFCKNVFDRDYKATIGVDF. The Mg(2+) site is built by T89 and D112. Positions 113 to 132 match the Switch 2 motif; it reads TAGQEKFKCIASAYYRGAQV. GTP-binding residues include G115, K172, D174, S203, A204, and K205. A disordered region spans residues 243–267; the sequence is GDLIQMEGSPPETQESKRPSSLGCC. S-geranylgeranyl cysteine attachment occurs at residues C266 and C267.

It belongs to the small GTPase superfamily. Rab family. Mg(2+) is required as a cofactor. As to expression, ubiquitously present in all tissues examined.

It is found in the golgi apparatus membrane. It carries out the reaction GTP + H2O = GDP + phosphate + H(+). Regulated by guanine nucleotide exchange factors (GEFs) which promote the exchange of bound GDP for free GTP. Regulated by GTPase activating proteins (GAPs) which increase the GTP hydrolysis activity. Inhibited by GDP dissociation inhibitors (GDIs). Its function is as follows. The small GTPases Rab are key regulators of intracellular membrane trafficking, from the formation of transport vesicles to their fusion with membranes. Rabs cycle between an inactive GDP-bound form and an active GTP-bound form that is able to recruit to membranes different sets of downstream effectors directly responsible for vesicle formation, movement, tethering and fusion. The sequence is that of Ras-related protein Rab-36 from Homo sapiens (Human).